The chain runs to 99 residues: Integration host factor subunit alpha (99 aa).

This sequence belongs to the bacterial histone-like protein family. As to quaternary structure, heterodimer of an alpha and a beta chain.

Its function is as follows. This protein is one of the two subunits of integration host factor, a specific DNA-binding protein that functions in genetic recombination as well as in transcriptional and translational control. The sequence is that of Integration host factor subunit alpha from Pseudoalteromonas translucida (strain TAC 125).